A 361-amino-acid polypeptide reads, in one-letter code: UDP-N-acetylglucosamine--N-acetylmuramyl-(pentapeptide) pyrophosphoryl-undecaprenol N-acetylglucosamine transferase (361 aa).

UDP-N-acetyl-alpha-D-glucosamine contacts are provided by residues 12 to 14 (TGG), Asn124, Arg163, Ser189, Ile241, 260 to 265 (ALTVSE), and Gln286.

The protein belongs to the glycosyltransferase 28 family. MurG subfamily.

Its subcellular location is the cell inner membrane. It carries out the reaction di-trans,octa-cis-undecaprenyl diphospho-N-acetyl-alpha-D-muramoyl-L-alanyl-D-glutamyl-meso-2,6-diaminopimeloyl-D-alanyl-D-alanine + UDP-N-acetyl-alpha-D-glucosamine = di-trans,octa-cis-undecaprenyl diphospho-[N-acetyl-alpha-D-glucosaminyl-(1-&gt;4)]-N-acetyl-alpha-D-muramoyl-L-alanyl-D-glutamyl-meso-2,6-diaminopimeloyl-D-alanyl-D-alanine + UDP + H(+). It functions in the pathway cell wall biogenesis; peptidoglycan biosynthesis. Cell wall formation. Catalyzes the transfer of a GlcNAc subunit on undecaprenyl-pyrophosphoryl-MurNAc-pentapeptide (lipid intermediate I) to form undecaprenyl-pyrophosphoryl-MurNAc-(pentapeptide)GlcNAc (lipid intermediate II). The chain is UDP-N-acetylglucosamine--N-acetylmuramyl-(pentapeptide) pyrophosphoryl-undecaprenol N-acetylglucosamine transferase from Aeromonas hydrophila subsp. hydrophila (strain ATCC 7966 / DSM 30187 / BCRC 13018 / CCUG 14551 / JCM 1027 / KCTC 2358 / NCIMB 9240 / NCTC 8049).